Here is a 352-residue protein sequence, read N- to C-terminus: Probable RNA methyltransferase CV_2253 (352 aa).

Catalysis depends on Glu-91, which acts as the Proton acceptor. Positions 94–320 (LLPRDGLCVS…TKVRDSAGQD (227 aa)) constitute a Radical SAM core domain. Cys-101 and Cys-325 form a disulfide bridge. 3 residues coordinate [4Fe-4S] cluster: Cys-108, Cys-112, and Cys-115. Residues 153-154 (GE), Ser-183, 206-208 (SLH), and Asn-282 each bind S-adenosyl-L-methionine. Cys-325 functions as the S-methylcysteine intermediate in the catalytic mechanism.

The protein belongs to the radical SAM superfamily. RlmN family. [4Fe-4S] cluster serves as cofactor.

Its subcellular location is the cytoplasm. This is Probable RNA methyltransferase CV_2253 from Chromobacterium violaceum (strain ATCC 12472 / DSM 30191 / JCM 1249 / CCUG 213 / NBRC 12614 / NCIMB 9131 / NCTC 9757 / MK).